The following is a 171-amino-acid chain: uncharacterized protein (171 aa).

An N-terminal signal peptide occupies residues 1–17; that stretch reads MLKRIIWILFLLGLTWG.

Functionally, part of the elfADCG-ycbUVF fimbrial operon, which promotes adhesion of bacteria to different abiotic surfaces. This is an uncharacterized protein from Escherichia coli (strain K12).